The following is a 262-amino-acid chain: Bacteriorhodopsin (262 aa).

Residues 1 to 13 (MLELLPTAVEGVS) constitute a propeptide that is removed on maturation. Position 14 is a pyrrolidone carboxylic acid (Gln-14). Residues 14–22 (QAQITGRPE) are Extracellular-facing. The chain crosses the membrane as a helical span at residues 23–42 (WIWLALGTALMGLGTLYFLV). Residues 43–56 (KGMGVSDPDAKKFY) lie on the Cytoplasmic side of the membrane. Residues 57–75 (AITTLVPAIAFTMYLSMLL) form a helical membrane-spanning segment. The Extracellular portion of the chain corresponds to 76–92 (GYGLTMVPFGGEQNPIY). A helical transmembrane segment spans residues 93–109 (WARYADWLFTTPLLLLD). Topologically, residues 110–120 (LALLVDADQGT) are cytoplasmic. A helical membrane pass occupies residues 121-140 (ILALVGADGIMIGTGLVGAL). The Extracellular segment spans residues 141–147 (TKVYSYR). A helical membrane pass occupies residues 148–167 (FVWWAISTAAMLYILYVLFF). Residues 168-185 (GFTSKAESMRPEVASTFK) lie on the Cytoplasmic side of the membrane. Residues 186–204 (VLRNVTVVLWSAYPVVWLI) traverse the membrane as a helical segment. Residues 205-216 (GSEGAGIVPLNI) are Extracellular-facing. Residues 217-236 (ETLLFMVLDVSAKVGFGLIL) traverse the membrane as a helical segment. Residue Lys-229 is modified to N6-(retinylidene)lysine. The Cytoplasmic portion of the chain corresponds to 237-262 (LRSRAIFGEAEAPEPSAGDGAAATSD).

As to quaternary structure, homotrimer. In terms of processing, the covalent binding of retinal to the apoprotein, bacterioopsin, generates bacteriorhodopsin.

The protein localises to the cell membrane. Its function is as follows. Light-driven proton pump. The sequence is that of Bacteriorhodopsin (bop) from Halobacterium salinarum (strain ATCC 700922 / JCM 11081 / NRC-1) (Halobacterium halobium).